Reading from the N-terminus, the 382-residue chain is 4-hydroxybutyrate dehydrogenase (382 aa).

NAD(+) is bound by residues Asp-37, Asn-67, 94–98, 138–142, and Lys-159; these read GSSID and TTSGT. Fe cation is bound by residues Asp-193, His-197, His-261, and His-280. Residue His-280 coordinates NAD(+).

This sequence belongs to the iron-containing alcohol dehydrogenase family. Fe cation serves as cofactor.

The enzyme catalyses 4-hydroxybutanoate + NAD(+) = succinate semialdehyde + NADH + H(+). With respect to regulation, shows competitive inhibition of GHBDH activity by the product succinic semialdehyde, and non-competitive inhibitions by the three other substrate-product combinations. The conversion of GHB to SSA is activated by two different saturating purified nudix hydrolases, B.methanolicus activator ACT and E.coli NudF. The nudix hydrolases do not activate the reverse reaction. Its function is as follows. Involved in the degradation of 4-hydroxybutyrate. Catalyzes the interconversion of gamma-hydroxybutyrate (GHB) and succinic semialdehyde (SSA). In Cupriavidus necator (Alcaligenes eutrophus), this protein is 4-hydroxybutyrate dehydrogenase.